Here is an 82-residue protein sequence, read N- to C-terminus: Probable [Fe-S]-dependent transcriptional repressor (82 aa).

Cys-56, Cys-61, Cys-64, and Cys-71 together coordinate iron-sulfur cluster.

It belongs to the FeoC family.

May function as a transcriptional regulator that controls feoABC expression. This chain is Probable [Fe-S]-dependent transcriptional repressor, found in Yersinia enterocolitica serotype O:8 / biotype 1B (strain NCTC 13174 / 8081).